We begin with the raw amino-acid sequence, 437 residues long: Enolase (437 aa).

Residue Gln162 coordinates (2R)-2-phosphoglycerate. The active-site Proton donor is the Glu204. Mg(2+)-binding residues include Asp251, Glu297, and Asp324. The (2R)-2-phosphoglycerate site is built by Lys349, Arg378, Ser379, and Lys400. Catalysis depends on Lys349, which acts as the Proton acceptor.

The protein belongs to the enolase family. It depends on Mg(2+) as a cofactor.

The protein resides in the cytoplasm. Its subcellular location is the secreted. It localises to the cell surface. It catalyses the reaction (2R)-2-phosphoglycerate = phosphoenolpyruvate + H2O. Its pathway is carbohydrate degradation; glycolysis; pyruvate from D-glyceraldehyde 3-phosphate: step 4/5. Functionally, catalyzes the reversible conversion of 2-phosphoglycerate (2-PG) into phosphoenolpyruvate (PEP). It is essential for the degradation of carbohydrates via glycolysis. The polypeptide is Enolase (Chlorobium luteolum (strain DSM 273 / BCRC 81028 / 2530) (Pelodictyon luteolum)).